The following is a 113-amino-acid chain: Protein FPV195 (113 aa).

Belongs to the poxviruses A31 family.

The chain is Protein FPV195 from Vertebrata (FPV).